The chain runs to 521 residues: GMC-type oxidoreductase acuG (521 aa).

FAD contacts are provided by residues threonine 14–valine 15, glutamate 34–alanine 35, leucine 82, asparagine 90–leucine 93, alanine 492, and tyrosine 503–glutamine 504.

It belongs to the GMC oxidoreductase family. FAD is required as a cofactor.

Its pathway is secondary metabolite biosynthesis. In terms of biological role, GMC-type oxidoreductase; part of the gene cluster that mediates the biosynthesis of aculins. The pathway begins with the synthesis of 6-methylsalicylic acid by the polyketide synthase (PKS) acuA via condensation of acetate and malonate units. The 6-methylsalicylic acid decarboxylase acuB then catalyzes the decarboxylation of 6-methylsalicylic acid to yield m-cresol (also known as 3-methylphenol). These first reactions occur in the cytosol. The intermediate m-cresol is then transported into the endoplasmic reticulum where the cytochrome P450 monooxygenase acuC converts it to m-hydroxybenzyl alcohol, which is further converted to gentisyl alcohol by the cytochrome P450 monooxygenase acuD. Gentisyl alcohol is further oxidized by the oxidoreductase acuE that probably catalyzes hydroxylation of the aromatic ring. The aromatic system might then be opened by oxidation through a Baeyer-Villiger type of oxidation, which could be catalyzed by acuF, with the carboxylic acid at C-1 subsequently reduced to an aldehyde by acuG. Subsequently, a hemiacetal is formed, before the dehydrogenase acuH would reduce the double bond between C-4 and C-6. Finally, keto-enol tautomerism results in formation of aculinic acid, which exists as two diastereomers (both R/S configurations at C-1) by non-enzymatic hemiacetal formation. The carboxypeptidase acuI could be involved in the linking of aculinic acid to an aculene A moiety produced by the aculene biosynthesis cluster and which leads to the production of aculin A. AcuI may also be involved in the attachment of proline to aculinic acid to form epi-aculins A and B. The sequence is that of GMC-type oxidoreductase acuG from Aspergillus aculeatus (strain ATCC 16872 / CBS 172.66 / WB 5094).